Reading from the N-terminus, the 100-residue chain is Putative insulin-like peptide beta-type 6 (100 aa).

The signal sequence occupies residues 1–18; sequence MHSIVALMLIGTILPIAA. 4 disulfide bridges follow: C54–C83, C66–C96, C70–C97, and C82–C87.

The protein belongs to the insulin family.

It localises to the secreted. The chain is Putative insulin-like peptide beta-type 6 (ins-5) from Caenorhabditis elegans.